We begin with the raw amino-acid sequence, 249 residues long: Triosephosphate isomerase (249 aa).

2 residues coordinate substrate: N12 and K14. Position 14 is an N6-acetyllysine (K14). S21 carries the phosphoserine modification. Y68 carries the 3'-nitrotyrosine modification. Position 80 is a phosphoserine (S80). H96 acts as the Electrophile in catalysis. At S106 the chain carries Phosphoserine. Residue K142 forms a Glycyl lysine isopeptide (Lys-Gly) (interchain with G-Cter in SUMO1) linkage. The residue at position 149 (K149) is an N6-succinyllysine. N6-acetyllysine; alternate is present on K156. An N6-succinyllysine; alternate modification is found at K156. Phosphoserine is present on S159. The active-site Proton acceptor is the E166. T173 bears the Phosphothreonine mark. K194 carries the N6-acetyllysine; alternate modification. K194 bears the N6-succinyllysine; alternate mark. K194 carries the N6-methyllysine; alternate modification. Position 198 is a phosphoserine (S198). 3'-nitrotyrosine is present on Y209. S212 carries the phosphoserine modification. T214 is modified (phosphothreonine). Residue S223 is modified to Phosphoserine. K238 carries the post-translational modification N6-acetyllysine.

Belongs to the triosephosphate isomerase family. As to quaternary structure, homodimer.

Its subcellular location is the cytoplasm. The enzyme catalyses D-glyceraldehyde 3-phosphate = dihydroxyacetone phosphate. The catalysed reaction is dihydroxyacetone phosphate = methylglyoxal + phosphate. It participates in carbohydrate degradation; glycolysis; D-glyceraldehyde 3-phosphate from glycerone phosphate: step 1/1. The protein operates within carbohydrate biosynthesis; gluconeogenesis. Its function is as follows. Triosephosphate isomerase is an extremely efficient metabolic enzyme that catalyzes the interconversion between dihydroxyacetone phosphate (DHAP) and D-glyceraldehyde-3-phosphate (G3P) in glycolysis and gluconeogenesis. In terms of biological role, it is also responsible for the non-negligible production of methylglyoxal a reactive cytotoxic side-product that modifies and can alter proteins, DNA and lipids. The chain is Triosephosphate isomerase (TPI1) from Homo sapiens (Human).